We begin with the raw amino-acid sequence, 168 residues long: ATP synthase subunit b (168 aa).

The chain crosses the membrane as a helical span at residues 10–30; the sequence is LYLGDMLFYLVSFLIMAALVW. The segment at 61-80 is disordered; that stretch reads EAQKLAAKRQEELKGSRQEA.

Belongs to the ATPase B chain family. As to quaternary structure, F-type ATPases have 2 components, F(1) - the catalytic core - and F(0) - the membrane proton channel. F(1) has five subunits: alpha(3), beta(3), gamma(1), delta(1), epsilon(1). F(0) has three main subunits: a(1), b(2) and c(10-14). The alpha and beta chains form an alternating ring which encloses part of the gamma chain. F(1) is attached to F(0) by a central stalk formed by the gamma and epsilon chains, while a peripheral stalk is formed by the delta and b chains.

It localises to the cell membrane. In terms of biological role, f(1)F(0) ATP synthase produces ATP from ADP in the presence of a proton or sodium gradient. F-type ATPases consist of two structural domains, F(1) containing the extramembraneous catalytic core and F(0) containing the membrane proton channel, linked together by a central stalk and a peripheral stalk. During catalysis, ATP synthesis in the catalytic domain of F(1) is coupled via a rotary mechanism of the central stalk subunits to proton translocation. Component of the F(0) channel, it forms part of the peripheral stalk, linking F(1) to F(0). This chain is ATP synthase subunit b, found in Limosilactobacillus fermentum (strain NBRC 3956 / LMG 18251) (Lactobacillus fermentum).